The following is a 206-amino-acid chain: Endoplasmic reticulum transmembrane protein 1 (206 aa).

Residues M1–T7 lie on the Lumenal side of the membrane. A helical membrane pass occupies residues L8–F28. The Cytoplasmic segment spans residues R29–Q45. A helical transmembrane segment spans residues Q46–W66. At K67–N104 the chain is on the lumenal side. Residues M105–V125 form a helical membrane-spanning segment. Residues K126–N206 are Cytoplasmic-facing. The segment at K140–Q163 is disordered. A compositionally biased stretch (basic and acidic residues) spans S150–Q163. K190 participates in a covalent cross-link: Glycyl lysine isopeptide (Lys-Gly) (interchain with G-Cter in ubiquitin). Residues K203 to N206 carry the Di-lysine motif motif.

It belongs to the BCAP29/BCAP31 family.

The protein resides in the endoplasmic reticulum membrane. Functionally, may play a role in anterograde transport of membrane proteins from the endoplasmic reticulum to the Golgi. The polypeptide is Endoplasmic reticulum transmembrane protein 1 (YET1) (Saccharomyces cerevisiae (strain ATCC 204508 / S288c) (Baker's yeast)).